Consider the following 341-residue polypeptide: tRNA N6-adenosine threonylcarbamoyltransferase (341 aa).

Positions 111 and 115 each coordinate Fe cation. Residues 134–138, Asp167, Gly180, and Asn276 each bind substrate; that span reads LVSGG. Asp304 contacts Fe cation.

It belongs to the KAE1 / TsaD family. Requires Fe(2+) as cofactor.

The protein localises to the cytoplasm. It catalyses the reaction L-threonylcarbamoyladenylate + adenosine(37) in tRNA = N(6)-L-threonylcarbamoyladenosine(37) in tRNA + AMP + H(+). Functionally, required for the formation of a threonylcarbamoyl group on adenosine at position 37 (t(6)A37) in tRNAs that read codons beginning with adenine. Is involved in the transfer of the threonylcarbamoyl moiety of threonylcarbamoyl-AMP (TC-AMP) to the N6 group of A37, together with TsaE and TsaB. TsaD likely plays a direct catalytic role in this reaction. This Pseudomonas fluorescens (strain Pf0-1) protein is tRNA N6-adenosine threonylcarbamoyltransferase.